Here is a 371-residue protein sequence, read N- to C-terminus: Cytochrome b (371 aa).

Transmembrane regions (helical) follow at residues 25–45 (FGSM…FLAV), 69–90 (WMMQ…YIHI), 105–125 (WMSG…GYVL), and 170–190 (FFAL…LHVI). The heme b site is built by His-75 and His-89. Residues His-174 and His-188 each coordinate heme b. His-193 provides a ligand contact to a ubiquinone. Transmembrane regions (helical) follow at residues 218 to 238 (YKDF…VSFF), 280 to 300 (LGGA…PFTH), 312 to 332 (LYQL…WAAT), and 339 to 358 (FITI…ISIP).

Belongs to the cytochrome b family. The cytochrome bc1 complex contains 3 respiratory subunits (MT-CYB, CYC1 and UQCRFS1), 2 core proteins (UQCRC1 and UQCRC2) and probably 6 low-molecular weight proteins. Requires heme b as cofactor.

The protein localises to the mitochondrion inner membrane. Its function is as follows. Component of the ubiquinol-cytochrome c reductase complex (complex III or cytochrome b-c1 complex) that is part of the mitochondrial respiratory chain. The b-c1 complex mediates electron transfer from ubiquinol to cytochrome c. Contributes to the generation of a proton gradient across the mitochondrial membrane that is then used for ATP synthesis. In Malayopython reticulatus (Reticulate python), this protein is Cytochrome b (MT-CYB).